Here is a 578-residue protein sequence, read N- to C-terminus: MSANQQSNSQEVLGEVLGPLSDNERLKRESNLLRGTIEQDLQDRITGGFTADNFQLIRFHGMYQQDDRDIRNERAKQKLEPLHNVMLRARMPGGIITPKQWLAIDKFATEHSLYGSIRLTTRQTFQFHGVLKPNIKLMHQTLNSIGIDSIATAGDVNRNVLCTTNPVESELHQEAYEWAKKISEHLLPKTRAYAEIWLDGEKVESTEEDEPILGKNYLPRKFKTTVVIPPQNDVDVHANDLNFVAIADNGKLVGFNVLVGGGLAMTHCDTSTYPRRADDFGFIPLEKTLDVAAAVVTTQRDWGNRSNRKNAKTKYTLDRVGSDVFKAEVEKRAGVKFEQSRPYEFTERGDRIGWVEGIDGKHHLALFIENGRLLDFPGKPLKTGVAEIAKIHKGDFRMTANQNLIVAGVPKSQKAKIEKIAREHGLMDDGVSEQRKNSMACVAFPTCPLAMAEAERFLPQFVTDVEGILEKHGIPEEDNIILRVTGCPNGCGRAMLAEIGLVGKAPGRYNLHLGGNRGGTRVPKMCKENITDKQILEEIDQLVARWAAEREEGEAFGDFTIRAGIIQEVFVSKRDFHA.

The span at 1–11 (MSANQQSNSQE) shows a compositional bias: polar residues. Residues 1–20 (MSANQQSNSQEVLGEVLGPL) are disordered. Positions 441, 447, 487, and 491 each coordinate [4Fe-4S] cluster. Cys491 serves as a coordination point for siroheme.

The protein belongs to the nitrite and sulfite reductase 4Fe-4S domain family. Alpha(8)-beta(8). The alpha component is a flavoprotein, the beta component is a hemoprotein. Requires siroheme as cofactor. [4Fe-4S] cluster serves as cofactor.

The enzyme catalyses hydrogen sulfide + 3 NADP(+) + 3 H2O = sulfite + 3 NADPH + 4 H(+). The protein operates within sulfur metabolism; hydrogen sulfide biosynthesis; hydrogen sulfide from sulfite (NADPH route): step 1/1. Functionally, component of the sulfite reductase complex that catalyzes the 6-electron reduction of sulfite to sulfide. This is one of several activities required for the biosynthesis of L-cysteine from sulfate. The protein is Sulfite reductase [NADPH] hemoprotein beta-component of Vibrio campbellii (strain ATCC BAA-1116).